A 206-amino-acid polypeptide reads, in one-letter code: Thiamine-phosphate synthase (206 aa).

Residues 35 to 39 (QLRHK) and Asn-67 each bind 4-amino-2-methyl-5-(diphosphooxymethyl)pyrimidine. The Mg(2+) site is built by Asp-68 and Asp-87. Ser-106 provides a ligand contact to 4-amino-2-methyl-5-(diphosphooxymethyl)pyrimidine. 132–134 (TGS) serves as a coordination point for 2-[(2R,5Z)-2-carboxy-4-methylthiazol-5(2H)-ylidene]ethyl phosphate. Residue Lys-135 coordinates 4-amino-2-methyl-5-(diphosphooxymethyl)pyrimidine. Residue Gly-163 coordinates 2-[(2R,5Z)-2-carboxy-4-methylthiazol-5(2H)-ylidene]ethyl phosphate.

It belongs to the thiamine-phosphate synthase family. Mg(2+) is required as a cofactor.

It carries out the reaction 2-[(2R,5Z)-2-carboxy-4-methylthiazol-5(2H)-ylidene]ethyl phosphate + 4-amino-2-methyl-5-(diphosphooxymethyl)pyrimidine + 2 H(+) = thiamine phosphate + CO2 + diphosphate. It catalyses the reaction 2-(2-carboxy-4-methylthiazol-5-yl)ethyl phosphate + 4-amino-2-methyl-5-(diphosphooxymethyl)pyrimidine + 2 H(+) = thiamine phosphate + CO2 + diphosphate. The enzyme catalyses 4-methyl-5-(2-phosphooxyethyl)-thiazole + 4-amino-2-methyl-5-(diphosphooxymethyl)pyrimidine + H(+) = thiamine phosphate + diphosphate. It functions in the pathway cofactor biosynthesis; thiamine diphosphate biosynthesis; thiamine phosphate from 4-amino-2-methyl-5-diphosphomethylpyrimidine and 4-methyl-5-(2-phosphoethyl)-thiazole: step 1/1. In terms of biological role, condenses 4-methyl-5-(beta-hydroxyethyl)thiazole monophosphate (THZ-P) and 2-methyl-4-amino-5-hydroxymethyl pyrimidine pyrophosphate (HMP-PP) to form thiamine monophosphate (TMP). The protein is Thiamine-phosphate synthase of Chlorobium phaeobacteroides (strain DSM 266 / SMG 266 / 2430).